The primary structure comprises 1932 residues: DOCK-like protein 1 (1932 aa).

Residues L1410 to S1824 form the DOCKER domain. A compositionally biased stretch (polar residues) spans S1908–D1921. Residues S1908–G1932 form a disordered region. The segment covering S1922–G1932 has biased composition (basic and acidic residues).

Belongs to the DOCK family. Forms an active heterodimer with LMO1.

Its subcellular location is the cytoplasm. It is found in the mitochondrion. In terms of biological role, forms a transiant heterodimeric complex with LMO1, that acts as a guanine nucleotide exchange factor exchange factor (GEF) for the small GTPase RHO5. DCK1, LMO1 and RHO5 relocate to mitochondria upon oxidative stress and trigger cell death. The DCK1/LMO1/RHO5 signaling module mediates mitochondrial turnover under nitrogen starvation conditions via mitophagy. The DCK1/LMO1/RHO5 signaling module plays also a function in cell wall integrity signaling. The protein is DOCK-like protein 1 of Saccharomyces cerevisiae (strain ATCC 204508 / S288c) (Baker's yeast).